The primary structure comprises 118 residues: Putative pterin-4-alpha-carbinolamine dehydratase (118 aa).

This sequence belongs to the pterin-4-alpha-carbinolamine dehydratase family.

The catalysed reaction is (4aS,6R)-4a-hydroxy-L-erythro-5,6,7,8-tetrahydrobiopterin = (6R)-L-erythro-6,7-dihydrobiopterin + H2O. The protein is Putative pterin-4-alpha-carbinolamine dehydratase of Pseudomonas fluorescens (strain ATCC BAA-477 / NRRL B-23932 / Pf-5).